The chain runs to 421 residues: Ribulose bisphosphate carboxylase large chain (421 aa).

Substrate-binding residues include asparagine 68 and threonine 118. Lysine 120 acts as the Proton acceptor in catalysis. Lysine 122 is a binding site for substrate. Mg(2+)-binding residues include lysine 146, aspartate 148, and glutamate 149. Lysine 146 carries the post-translational modification N6-carboxylysine. Residue histidine 239 is the Proton acceptor of the active site. Substrate-binding residues include arginine 240, histidine 272, and serine 324.

The protein belongs to the RuBisCO large chain family. Type I subfamily. In terms of assembly, heterohexadecamer of 8 large chains and 8 small chains; disulfide-linked. The disulfide link is formed within the large subunit homodimers. Requires Mg(2+) as cofactor. Post-translationally, the disulfide bond which can form in the large chain dimeric partners within the hexadecamer appears to be associated with oxidative stress and protein turnover.

It localises to the plastid. The protein localises to the chloroplast. It carries out the reaction 2 (2R)-3-phosphoglycerate + 2 H(+) = D-ribulose 1,5-bisphosphate + CO2 + H2O. The catalysed reaction is D-ribulose 1,5-bisphosphate + O2 = 2-phosphoglycolate + (2R)-3-phosphoglycerate + 2 H(+). In terms of biological role, ruBisCO catalyzes two reactions: the carboxylation of D-ribulose 1,5-bisphosphate, the primary event in carbon dioxide fixation, as well as the oxidative fragmentation of the pentose substrate in the photorespiration process. Both reactions occur simultaneously and in competition at the same active site. The protein is Ribulose bisphosphate carboxylase large chain (rbcL) of Aegilops tauschii (Tausch's goatgrass).